We begin with the raw amino-acid sequence, 447 residues long: Putative branched-chain amino acid carrier protein SE_1090 (447 aa).

A run of 12 helical transmembrane segments spans residues 5–25, 40–60, 74–94, 114–134, 143–163, 193–213, 229–249, 290–310, 317–337, 350–370, 382–402, and 417–437; these read TWII…LIFP, ILAF…VGAL, PRFS…LFAI, GNLA…YLCL, IGSL…IKGF, GYLT…VNAI, IIAG…LGYI, LLGI…IVSV, ILPK…SFIL, VPVL…ILIA, IPLI…QGWI, and LEWF…SYFV.

Belongs to the branched chain amino acid transporter family.

It is found in the cell membrane. Its function is as follows. Component of the transport system for branched-chain amino acids (leucine, isoleucine and valine), which is coupled to a proton motive force. This Staphylococcus epidermidis (strain ATCC 12228 / FDA PCI 1200) protein is Putative branched-chain amino acid carrier protein SE_1090.